Here is a 248-residue protein sequence, read N- to C-terminus: Ribonuclease HII (248 aa).

The region spanning 29–219 (DIVCGVDEAG…VREAHLRLGT (191 aa)) is the RNase H type-2 domain. A divalent metal cation-binding residues include Asp-35, Glu-36, and Asp-128.

Belongs to the RNase HII family. Mn(2+) serves as cofactor. It depends on Mg(2+) as a cofactor.

It localises to the cytoplasm. The enzyme catalyses Endonucleolytic cleavage to 5'-phosphomonoester.. Functionally, endonuclease that specifically degrades the RNA of RNA-DNA hybrids. The polypeptide is Ribonuclease HII (Paraburkholderia xenovorans (strain LB400)).